A 309-amino-acid polypeptide reads, in one-letter code: Succinate dehydrogenase [ubiquinone] iron-sulfur subunit 3, mitochondrial (309 aa).

A mitochondrion-targeting transit peptide spans 1-22 (MSSVLRLLGRRICNPAAEKVRL). In terms of domain architecture, 2Fe-2S ferredoxin-type spans 69 to 160 (FKIYRWNPDK…PTIITPLPHM (92 aa)). Residues C120, C125, and C140 each coordinate [2Fe-2S] cluster. The region spanning 202-232 (DRKKLDGLYECILCACCTTSCPSYWWNPEEF) is the 4Fe-4S ferredoxin-type domain. [4Fe-4S] cluster-binding residues include C212, C215, and C218. C222 lines the [3Fe-4S] cluster pocket. W227 is a binding site for a ubiquinone. Positions 270 and 276 each coordinate [3Fe-4S] cluster. Residue C280 coordinates [4Fe-4S] cluster.

Belongs to the succinate dehydrogenase/fumarate reductase iron-sulfur protein family. In terms of assembly, component of complex II composed of eight subunits in plants: four classical SDH subunits SDH1, SDH2, SDH3 and SDH4 (a flavoprotein (FP), an iron-sulfur protein (IP), and a cytochrome b composed of a large and a small subunit.), as well as four subunits unknown in mitochondria from bacteria and heterotrophic eukaryotes. [2Fe-2S] cluster serves as cofactor. It depends on [3Fe-4S] cluster as a cofactor. The cofactor is [4Fe-4S] cluster.

The protein localises to the mitochondrion inner membrane. It carries out the reaction a quinone + succinate = fumarate + a quinol. Its pathway is carbohydrate metabolism; tricarboxylic acid cycle; fumarate from succinate (eukaryal route): step 1/1. Iron-sulfur protein (IP) subunit of succinate dehydrogenase (SDH) that is involved in complex II of the mitochondrial electron transport chain and is responsible for transferring electrons from succinate to ubiquinone (coenzyme Q). The protein is Succinate dehydrogenase [ubiquinone] iron-sulfur subunit 3, mitochondrial (SDH2-3) of Arabidopsis thaliana (Mouse-ear cress).